The chain runs to 119 residues: Putative yippee-like protein Os10g0369500 (119 aa).

In terms of domain architecture, Yippee spans Ala-21 to Ala-118. 4 residues coordinate Zn(2+): Cys-25, Cys-28, Cys-81, and Cys-84.

The protein belongs to the yippee family.

The chain is Putative yippee-like protein Os10g0369500 from Oryza sativa subsp. japonica (Rice).